A 445-amino-acid chain; its full sequence is Phosphoglucosamine mutase (445 aa).

Catalysis depends on Ser-102, which acts as the Phosphoserine intermediate. Mg(2+) contacts are provided by Ser-102, Asp-241, Asp-243, and Asp-245. The residue at position 102 (Ser-102) is a Phosphoserine.

Belongs to the phosphohexose mutase family. It depends on Mg(2+) as a cofactor. Post-translationally, activated by phosphorylation.

It carries out the reaction alpha-D-glucosamine 1-phosphate = D-glucosamine 6-phosphate. Its function is as follows. Catalyzes the conversion of glucosamine-6-phosphate to glucosamine-1-phosphate. This Shigella dysenteriae serotype 1 (strain Sd197) protein is Phosphoglucosamine mutase.